Here is a 217-residue protein sequence, read N- to C-terminus: Zinc finger CCHC-type and RNA-binding motif-containing protein 1 (217 aa).

The 79-residue stretch at 10-88 (STVYVSNLPF…RVIKASIAID (79 aa)) folds into the RRM domain. A CCHC-type zinc finger spans residues 105–122 (SKCYECGESGHLSYACPK). The disordered stretch occupies residues 120 to 217 (CPKNMLGERE…YFSDEEELSD (98 aa)). The span at 145-163 (PEEEIEEVEVSEEEGEDPA) shows a compositional bias: acidic residues. Phosphoserine is present on residues serine 155, serine 210, and serine 216.

Component of the U11/U12 snRNPs that are part of the U12-type spliceosome. Interacts with ZRSR1. As to expression, expressed at higher level in heart and testis, and at lower level in cerebellum. Weakly expressed at low level in liver.

It is found in the nucleus. Its subcellular location is the nucleoplasm. The protein is Zinc finger CCHC-type and RNA-binding motif-containing protein 1 (Zcrb1) of Mus musculus (Mouse).